A 130-amino-acid polypeptide reads, in one-letter code: Large ribosomal subunit protein bL17 (130 aa).

It belongs to the bacterial ribosomal protein bL17 family. In terms of assembly, part of the 50S ribosomal subunit. Contacts protein L32.

This is Large ribosomal subunit protein bL17 from Pectobacterium atrosepticum (strain SCRI 1043 / ATCC BAA-672) (Erwinia carotovora subsp. atroseptica).